A 387-amino-acid polypeptide reads, in one-letter code: SLC2A4 regulator (387 aa).

Disordered stretches follow at residues 1 to 97 (MERP…RATP) and 139 to 179 (EALV…PPEA). Over residues 27-36 (GPGPRAAPVT) the composition is skewed to low complexity. The C2H2-type zinc finger occupies 200–225 (FQCLWKSCGKVLSTASAMQRHIRLVH). The Nuclear export signal motif lies at 253–263 (LTDGLSSLTPV). Phosphoserine is present on residues Ser264 and Ser268. The segment at 283 to 305 (EPPALPSPLRPPAPPLPPPPVLS) is disordered. Residues 285–303 (PALPSPLRPPAPPLPPPPV) show a composition bias toward pro residues. Positions 351–354 (RKPR) match the Nuclear localization signal motif.

In terms of assembly, interacts with MEF2A. In terms of tissue distribution, according to PubMed:14630949, expressed in heart, skeletal muscle, liver, kidney and pancreas; undetectable in lung, placenta or brain. According to PubMed:14625278, ubiquitously expressed, with lowest expression in brain and ileum.

It is found in the cytoplasm. The protein localises to the nucleus. Transcription factor involved in SLC2A4 and HD gene transactivation. Binds to the consensus sequence 5'-GCCGGCG-3'. This Homo sapiens (Human) protein is SLC2A4 regulator (SLC2A4RG).